Reading from the N-terminus, the 498-residue chain is Probable global transactivator (498 aa).

The Helicase ATP-binding domain occupies 43 to 206 (RERRGRPHGG…YAIIHFLRCR (164 aa)). 55–63 (ADDMGLGKT) serves as a coordination point for ATP. The DEAH box motif lies at 157–160 (DEAH). The 157-residue stretch at 337-493 (ELVQRVLDTP…RTALNYEDIK (157 aa)) folds into the Helicase C-terminal domain.

The protein belongs to the SNF2/RAD54 helicase family.

The polypeptide is Probable global transactivator (GTA) (Orgyia pseudotsugata (Douglas-fir tussock moth)).